The sequence spans 965 residues: Argonaute protein wago-4 (965 aa).

The tract at residues 1-34 (MPALPPVYTPSGAPSSVHAPPAVPPVPVPTQPLR) is disordered. Positions 10–20 (PSGAPSSVHAP) are enriched in low complexity. Residues 21 to 30 (PAVPPVPVPT) show a composition bias toward pro residues. In terms of domain architecture, PAZ spans 318–428 (PILDKLKEIT…YPMELLKISS (111 aa)). The region spanning 594–924 (TFVFIITDDS…YAKRGRNLWN (331 aa)) is the Piwi domain.

It belongs to the argonaute family. WAGO subfamily. In terms of assembly, interacts with znfx-1; the interaction promotes the transmission of epigenetic information across generations. May interact with mina-1. As to expression, expressed in the hermaphrodite germline and in oocytes. Expressed at a low level in the male germline. Not expressed in the soma of hermaphrodites or males.

The protein localises to the cytoplasm. It is found in the perinuclear region. The protein resides in the cytoplasmic granule. Functionally, argonaute protein which is involved in the endogenous small interfering RNA (endo-siRNA) pathway and is required for RNA-mediated gene silencing (RNAi) in the germline. Interacts with secondary 22G-RNAs, which are RNA-dependent RNA polymerase-derived endo-siRNAs, typically 22 nucleotides in length with a 5'guanosine residue. Also interacts with the mRNA targets of 22G-RNAs. Associates with znfx-1 to mediate small RNA-directed transgenerational epigenetic inheritance of both germline- and soma-expressed genes. The chain is Argonaute protein wago-4 from Caenorhabditis elegans.